The following is a 193-amino-acid chain: Adenylate kinase (193 aa).

Residue 10–15 coordinates ATP; the sequence is GAGKGT. An NMP region spans residues 30-59; it reads STGDMLRAAVKAGTPIGLKAKAVMDAGGLV. AMP contacts are provided by residues Thr31, Arg36, 57 to 59, 85 to 88, and Gln92; these read GLV and GFPR. Positions 126–142 are LID; that stretch reads KRAKETLAAGGTVRADD. Position 127 (Arg127) interacts with ATP. 2 residues coordinate AMP: Arg139 and Arg150. Residue Ala178 coordinates ATP.

This sequence belongs to the adenylate kinase family. As to quaternary structure, monomer.

It is found in the cytoplasm. It carries out the reaction AMP + ATP = 2 ADP. Its pathway is purine metabolism; AMP biosynthesis via salvage pathway; AMP from ADP: step 1/1. In terms of biological role, catalyzes the reversible transfer of the terminal phosphate group between ATP and AMP. Plays an important role in cellular energy homeostasis and in adenine nucleotide metabolism. The chain is Adenylate kinase from Beijerinckia indica subsp. indica (strain ATCC 9039 / DSM 1715 / NCIMB 8712).